Consider the following 772-residue polypeptide: Alpha-xylosidase (772 aa).

Aspartate 416 serves as the catalytic Nucleophile. Glutamate 419 is a catalytic residue. Aspartate 482 acts as the Proton donor in catalysis.

It belongs to the glycosyl hydrolase 31 family. In terms of assembly, homohexamer.

It carries out the reaction Hydrolysis of terminal, non-reducing alpha-D-xylose residues with release of alpha-D-xylose.. Functionally, can catalyze the transfer of alpha-xylosyl residue from alpha-xyloside to xylose, glucose, mannose, fructose, maltose, isomaltose, nigerose, kojibiose, sucrose and trehalose. The chain is Alpha-xylosidase (yicI) from Escherichia coli (strain K12).